We begin with the raw amino-acid sequence, 873 residues long: Protein sey1 (873 aa).

Residues 1–762 (MVDQRPRAGS…KRSAIGGITQ (762 aa)) lie on the Cytoplasmic side of the membrane. The GB1/RHD3-type G domain maps to 68–320 (GFNYHLISVF…IPADGFAHYA (253 aa)). Residue 78-85 (GSQSTGKS) participates in GTP binding. Residues 462 to 519 (SYDFAEIVKQETKAALERYEKEARASLVEGTSWSNYKQELKLYQKDLAEVSGQLRRDE) are a coiled coil. A disordered region spans residues 691–716 (RWVGHTPSSATAADEEDLTPIGGVDE). Positions 703-716 (ADEEDLTPIGGVDE) are enriched in acidic residues. The helical transmembrane segment at 763-783 (VPLYFYGLLLALGWNEIWAVL) threads the bilayer. Residues 784-786 (RNP) are Lumenal-facing. The chain crosses the membrane as a helical span at residues 787–807 (AYFFLLFVCAIGAYVTYQLNL). Topologically, residues 808-873 (WGPILKMADA…VEDEDENDDI (66 aa)) are cytoplasmic. Positions 812 to 839 (LKMADAASRQALEELKKKLREFLEASDT) form a coiled coil. Positions 839–873 (TGRQAMAMSSGEEYEMSSLNRGGKRVEDEDENDDI) are disordered.

Belongs to the TRAFAC class dynamin-like GTPase superfamily. GB1/RHD3 GTPase family. RHD3 subfamily.

The protein localises to the endoplasmic reticulum membrane. Cooperates with the reticulon proteins and tubule-shaping DP1 family proteins to generate and maintain the structure of the tubular endoplasmic reticulum network. Has GTPase activity, which is required for its function in ER organization. This chain is Protein sey1 (sey1), found in Talaromyces marneffei (strain ATCC 18224 / CBS 334.59 / QM 7333) (Penicillium marneffei).